A 58-amino-acid chain; its full sequence is Large ribosomal subunit protein bL32 (58 aa).

Residues 1 to 24 are disordered; sequence MAVPKKKTSKSKRDKRKATWKRKA.

Belongs to the bacterial ribosomal protein bL32 family.

The sequence is that of Large ribosomal subunit protein bL32 from Synechococcus sp. (strain ATCC 27144 / PCC 6301 / SAUG 1402/1) (Anacystis nidulans).